The primary structure comprises 73 residues: NAD(P)H-quinone oxidoreductase subunit L (73 aa).

The next 2 membrane-spanning stretches (helical) occupy residues 7 to 27 (LIGL…PFLF) and 44 to 64 (VLMF…APFM).

It belongs to the complex I NdhL subunit family. In terms of assembly, NDH-1 can be composed of about 15 different subunits; different subcomplexes with different compositions have been identified which probably have different functions.

The protein resides in the cellular thylakoid membrane. The enzyme catalyses a plastoquinone + NADH + (n+1) H(+)(in) = a plastoquinol + NAD(+) + n H(+)(out). It catalyses the reaction a plastoquinone + NADPH + (n+1) H(+)(in) = a plastoquinol + NADP(+) + n H(+)(out). Functionally, NDH-1 shuttles electrons from an unknown electron donor, via FMN and iron-sulfur (Fe-S) centers, to quinones in the respiratory and/or the photosynthetic chain. The immediate electron acceptor for the enzyme in this species is believed to be plastoquinone. Couples the redox reaction to proton translocation, and thus conserves the redox energy in a proton gradient. Cyanobacterial NDH-1 also plays a role in inorganic carbon-concentration. In Synechococcus sp. (strain JA-3-3Ab) (Cyanobacteria bacterium Yellowstone A-Prime), this protein is NAD(P)H-quinone oxidoreductase subunit L.